A 62-amino-acid polypeptide reads, in one-letter code: Photosystem II reaction center protein Z (62 aa).

The next 2 helical transmembrane spans lie at 8-28 (AVFALIATSLILLISVPVVFA) and 41-61 (FSGTSLWIGLVFLVGILNSLI).

Belongs to the PsbZ family. PSII is composed of 1 copy each of membrane proteins PsbA, PsbB, PsbC, PsbD, PsbE, PsbF, PsbH, PsbI, PsbJ, PsbK, PsbL, PsbM, PsbT, PsbY, PsbZ, Psb30/Ycf12, at least 3 peripheral proteins of the oxygen-evolving complex and a large number of cofactors. It forms dimeric complexes.

It is found in the plastid. The protein localises to the chloroplast thylakoid membrane. May control the interaction of photosystem II (PSII) cores with the light-harvesting antenna, regulates electron flow through the 2 photosystem reaction centers. PSII is a light-driven water plastoquinone oxidoreductase, using light energy to abstract electrons from H(2)O, generating a proton gradient subsequently used for ATP formation. In Nicotiana sylvestris (Wood tobacco), this protein is Photosystem II reaction center protein Z.